Consider the following 106-residue polypeptide: Large ribosomal subunit protein eL30 (106 aa).

It belongs to the eukaryotic ribosomal protein eL30 family.

This Methanococcus maripaludis (strain C5 / ATCC BAA-1333) protein is Large ribosomal subunit protein eL30.